A 446-amino-acid chain; its full sequence is ATP-dependent protease ATPase subunit HslU (446 aa).

ATP contacts are provided by residues Ile17, 59–64 (GVGKTE), Asp255, Glu320, and Arg392.

The protein belongs to the ClpX chaperone family. HslU subfamily. As to quaternary structure, a double ring-shaped homohexamer of HslV is capped on each side by a ring-shaped HslU homohexamer. The assembly of the HslU/HslV complex is dependent on binding of ATP.

It localises to the cytoplasm. ATPase subunit of a proteasome-like degradation complex; this subunit has chaperone activity. The binding of ATP and its subsequent hydrolysis by HslU are essential for unfolding of protein substrates subsequently hydrolyzed by HslV. HslU recognizes the N-terminal part of its protein substrates and unfolds these before they are guided to HslV for hydrolysis. The protein is ATP-dependent protease ATPase subunit HslU of Pseudomonas fluorescens (strain ATCC BAA-477 / NRRL B-23932 / Pf-5).